A 411-amino-acid polypeptide reads, in one-letter code: Eukaryotic initiation factor 4A-III (411 aa).

M1 carries the post-translational modification N-acetylmethionine. Position 2 is an N-acetylalanine; in Eukaryotic initiation factor 4A-III, N-terminally processed (A2). Residues S10 and S12 each carry the phosphoserine modification. A Glycyl lysine isopeptide (Lys-Gly) (interchain with G-Cter in SUMO2) cross-link involves residue K19. Positions 38–66 (PTFDTMGLREDLLRGIYAYGFEKPSAIQQ) match the Q motif motif. Residues K60, Q65, and 85-90 (GTGKTA) contribute to the ATP site. Residues 69–239 (IKQIIKGRDV…NKFMTDPIRI (171 aa)) form the Helicase ATP-binding domain. Position 124 is an N6-acetyllysine (K124). K152 participates in a covalent cross-link: Glycyl lysine isopeptide (Lys-Gly) (interchain with G-Cter in SUMO2). The residue at position 163 (T163) is a Phosphothreonine. The DEAD box motif lies at 187-190 (DEAD). N6-acetyllysine is present on residues K198 and K296. The 162-residue stretch at 250–411 (GIKQFFVAVE…EMPMNVADLI (162 aa)) folds into the Helicase C-terminal domain. A Glycyl lysine isopeptide (Lys-Gly) (interchain with G-Cter in SUMO2) cross-link involves residue K314. At K321 the chain carries N6-acetyllysine. ATP-binding positions include D342 and 367–371 (RSGRY). Glycyl lysine isopeptide (Lys-Gly) (interchain with G-Cter in SUMO2) cross-links involve residues K374 and K382.

Belongs to the DEAD box helicase family. eIF4A subfamily. As to quaternary structure, identified in the spliceosome C complex. Core component of the mRNA splicing-dependent exon junction complex (EJC); the core complex contains CASC3, EIF4A3, MAGOH or MAGOHB, and RBM8A. Interacts with CASC3, MAGOH, NXF1, RBM8A and ALYREF/THOC4. Component of the ALYREF/THOC4-EJC-RNA complex; in the complex interacts with MAGOH, RBM8A and THOC4 (via the WXHD motif); these interactions are likely specific to RNA-bound EJC. May interact with NOM1. Interacts with POLDIP3. Interacts with CWC22 and PRPF19 in an RNA-independent manner. Direct interaction with CWC22 is mediated by the helicase C-terminal domain. Full interaction with CWC22 occurs only when EIF4A3 is not part of the EJC and prevents EIF4A3 binding to RNA. Identified in a complex composed of the EJC core, UPF3B and UPF2. The EJC core can also interact with UPF3A (in vitro). Interacts with NCBP3. Interacts with NRDE2. Interacts with DHX34; the interaction is RNA-independent.

It localises to the nucleus. The protein localises to the nucleus speckle. The protein resides in the cytoplasm. The enzyme catalyses ATP + H2O = ADP + phosphate + H(+). The ATPase activity is increased some 4-fold in the presence of RNA. Its function is as follows. ATP-dependent RNA helicase. Involved in pre-mRNA splicing as component of the spliceosome. Core component of the splicing-dependent multiprotein exon junction complex (EJC) deposited at splice junctions on mRNAs. The EJC is a dynamic structure consisting of core proteins and several peripheral nuclear and cytoplasmic associated factors that join the complex only transiently either during EJC assembly or during subsequent mRNA metabolism. The EJC marks the position of the exon-exon junction in the mature mRNA for the gene expression machinery and the core components remain bound to spliced mRNAs throughout all stages of mRNA metabolism thereby influencing downstream processes including nuclear mRNA export, subcellular mRNA localization, translation efficiency and nonsense-mediated mRNA decay (NMD). Its RNA-dependent ATPase and RNA-helicase activities are induced by CASC3, but abolished in presence of the MAGOH-RBM8A heterodimer, thereby trapping the ATP-bound EJC core onto spliced mRNA in a stable conformation. The inhibition of ATPase activity by the MAGOH-RBM8A heterodimer increases the RNA-binding affinity of the EJC. Involved in translational enhancement of spliced mRNAs after formation of the 80S ribosome complex. Binds spliced mRNA in sequence-independent manner, 20-24 nucleotides upstream of mRNA exon-exon junctions. Shows higher affinity for single-stranded RNA in an ATP-bound core EJC complex than after the ATP is hydrolyzed. Involved in the splicing modulation of BCL2L1/Bcl-X (and probably other apoptotic genes); specifically inhibits formation of proapoptotic isoforms; the function is different from the established EJC assembly. Involved in craniofacial development. This Mus musculus (Mouse) protein is Eukaryotic initiation factor 4A-III (Eif4a3).